The following is a 591-amino-acid chain: Serine/threonine-protein phosphatase PP2A 65 kDa regulatory subunit (591 aa).

A2 carries the post-translational modification N-acetylalanine. HEAT repeat units lie at residues 10-48, 49-86, 87-125, 126-163, 164-202, 203-241, 242-280, 281-323, 324-362, 363-401, 402-440, 441-479, 480-518, 519-557, and 558-591; these read DSLYPIAVLIDELKNEDVQLRLNSIKKLSTIALALGEER, TRSELIPFLTETIYDEDEVLLALADQLGNFTSLVGGPE, FAMYLIPPLESLATVEETVVRDKAVESLRTVAAEHSAQD, LEIHVVPTLQRLVSGDWFTSRTSACGLFSVCYPRVTQP, VKAELRANFRKLCQDETPMVRRAAANKLGEFAKVVETEY, LKSDLIPNFVQLAQDDQDSVRLLAVEACVSIAQLLPQDD, VEHLVLPTLRQCASDSSWRVRYMVAEKFVDLQKAVGPEI, TRVD…QVQI, ILSSILPYVRDLVSDPNPHVKSALASVIMGLSPMLGAYQ, TVEQLLPLFLIQLKDECPEVRLNIISNLDCVNDVIGIQQ, LSQSLLPAIVELAEDSKWRVRLAIIEYMPALAGQLGQEF, FDQKLRGLCMGWLNDHVYAIREAATLNMKKLVEQFGAPW, AEQAIIPMILVMSRNKNYLHRMTCLFCLNVLAEVCGTDI, TTKLLLPTVLLLAADPVANVRFNVAKTLQKISPFLEASV, and IDAQVKPTLDKLNTDTDVDVKHFAAQAIAGIAAA.

Belongs to the phosphatase 2A regulatory subunit A family. PP2A exists in several trimeric forms, all of which consist of a core composed of a catalytic subunit associated with a 65 kDa regulatory subunit (PR65) (subunit A). The core complex associates with a third, variable subunit (subunit B), which confers distinct properties to the holoenzyme. Interacts with the inorganic phosphate transporter PXo (CG10483). Component of the Integrator-PP2A (INTAC) complex, composed of the Integrator core complex and protein phosphatase 2A subunits mts/PP2A and Pp2A-29B. Expression varies in tissues throughout development. Highly distributed expression in early embryos. In late embryonal development, found at high levels in nervous system and gonads. In third instar larvae, found in brain, imaginal disks and salivary glands.

The protein localises to the nucleus. In terms of biological role, the PR65 subunit of protein phosphatase 2A serves as a scaffolding molecule to coordinate the assembly of the catalytic subunit and a variable regulatory B subunit. Key mediator of a quality checkpoint during transcription elongation as part of the Integrator-PP2A (INTAC) complex. The INTAC complex drives premature transcription termination of transcripts that are unfavorably configured for transcriptional elongation: within the INTAC complex, acts as a scaffolding subunit for mts/PP2A, which catalyzes dephosphorylation of the C-terminal domain (CTD) of Pol II subunit POLR2A/RPB1 and Spt5, thereby preventing transcriptional elongation. This chain is Serine/threonine-protein phosphatase PP2A 65 kDa regulatory subunit (Pp2A-29B), found in Drosophila melanogaster (Fruit fly).